The chain runs to 440 residues: Endoglucanase B (440 aa).

The N-terminal stretch at 1-33 is a signal peptide; sequence MNKRLSRGKISLLASVFVTTTFMGGVNVLASTA. Glutamate 179 acts as the Proton donor in catalysis. Glutamate 305 acts as the Nucleophile in catalysis. The 60-residue stretch at 381-440 folds into the Dockerin domain; sequence TSYSLGDVNKDGKVNAIDYAVLKSILLGTNTNVDLSVSDMNKDGKVNALDLAVLKKMLLS.

The protein belongs to the glycosyl hydrolase 5 (cellulase A) family.

The catalysed reaction is Endohydrolysis of (1-&gt;4)-beta-D-glucosidic linkages in cellulose, lichenin and cereal beta-D-glucans.. It carries out the reaction Endohydrolysis of (1-&gt;4)-beta-D-xylosidic linkages in xylans.. Functionally, has endoglucanase activity on carboxymethyl-cellulose (CMC), xylan and lichenan, but not Avicel. The sequence is that of Endoglucanase B (engB) from Clostridium cellulovorans (strain ATCC 35296 / DSM 3052 / OCM 3 / 743B).